The sequence spans 407 residues: Odorant receptor 67a (407 aa).

Topologically, residues 1–40 are cytoplasmic; sequence MDNVAEMPEEKYVEVDDFLRLAVKFYNTLGIDPYETGRKR. A helical transmembrane segment spans residues 41-61; the sequence is TIWFQIYFALNMFNMVFSFYA. At 62 to 79 the chain is on the extracellular side; sequence EVATLVDRLRDNENFLES. The chain crosses the membrane as a helical span at residues 80-100; it reads CILLSYVSFVVMGLSKIGAVM. Over 101–144 the chain is Cytoplasmic; the sequence is KKKPKMTALVRQLETCFPSPSAKVQEEYAVKSWLKRCHIYTKGF. A helical transmembrane segment spans residues 145 to 165; the sequence is GGLFMIMYFAHALIPLFIYFI. The Extracellular segment spans residues 166–208; it reads QRVLLHYPDAKQIMPFYQLEPWEFRDSWLFYPSYFHQSSAGYT. The chain crosses the membrane as a helical span at residues 209-229; the sequence is ATCGSIAGDLMIFAVVLQVIM. Over 230 to 278 the chain is Cytoplasmic; it reads HYERLAKVLREFKIQAHNAPNGAKEDIRKLQSLVANHIDILRLTDLMNE. Residues 279 to 300 form a helical membrane-spanning segment; that stretch reads VFGIPLLLNFIASALLVCLVGV. At 301-314 the chain is on the extracellular side; the sequence is QLTIALSPEYFCKQ. The chain crosses the membrane as a helical span at residues 315-331; that stretch reads MLFLISVLLEVYLLCSF. The Cytoplasmic segment spans residues 332 to 378; that stretch reads SQRLIDASENVGHAAYDMDWLGSDKRFKKILIFISMRSQKPVCLKAT. A helical transmembrane segment spans residues 379–401; that stretch reads VVLDLSMPTMSIFLGMSYKFFCA. Topologically, residues 402–407 are extracellular; it reads VRTMYQ.

It belongs to the insect chemoreceptor superfamily. Heteromeric odorant receptor channel (TC 1.A.69) family. Or49a subfamily. Interacts with Orco. Complexes exist early in the endomembrane system in olfactory sensory neurons (OSNs), coupling these complexes to the conserved ciliary trafficking pathway. As to expression, expressed in olfactory sensory neurons in the antenna.

The protein resides in the cell membrane. Its function is as follows. Odorant receptor which mediates acceptance or avoidance behavior, depending on its substrates. The odorant receptor repertoire encodes a large collection of odor stimuli that vary widely in identity, intensity, and duration. Forms a complex with Orco to form odorant-sensing units, providing sensitive and prolonged odorant signaling and calcium permeability. Involved in the behavioral responses to benzaldehyde and acetophenone. This is Odorant receptor 67a (Or67a) from Drosophila melanogaster (Fruit fly).